A 413-amino-acid polypeptide reads, in one-letter code: Lamin tail domain-containing protein 1 (413 aa).

Disordered regions lie at residues 1–25 and 102–128; these read MMKE…VQDG and HKDS…SDVD. Over residues 107-128 the composition is skewed to polar residues; that stretch reads LGKQSTSSMVPRRQPQSSSDVD. Positions 169 to 287 constitute an LTD domain; it reads EVGQFTSSSL…EAIAWYTPIH (119 aa). The tract at residues 356–413 is disordered; it reads LPNKSPWCRNPNTSPHPYSSLIDSHDSDISESSLDTQLKPQPTKPKPDPGTKKKKAKS. Over residues 385–396 the composition is skewed to low complexity; sequence SESSLDTQLKPQ.

This sequence belongs to the intermediate filament family.

This chain is Lamin tail domain-containing protein 1 (Lmntd1), found in Mus musculus (Mouse).